A 184-amino-acid chain; its full sequence is ATP synthase subunit b, chloroplastic (184 aa).

Residues 27-49 (LATNPINLSVVLGVLVFFGKGVL) form a helical membrane-spanning segment.

This sequence belongs to the ATPase B chain family. As to quaternary structure, F-type ATPases have 2 components, F(1) - the catalytic core - and F(0) - the membrane proton channel. F(1) has five subunits: alpha(3), beta(3), gamma(1), delta(1), epsilon(1). F(0) has four main subunits: a(1), b(1), b'(1) and c(10-14). The alpha and beta chains form an alternating ring which encloses part of the gamma chain. F(1) is attached to F(0) by a central stalk formed by the gamma and epsilon chains, while a peripheral stalk is formed by the delta, b and b' chains.

The protein resides in the plastid. Its subcellular location is the chloroplast thylakoid membrane. Functionally, f(1)F(0) ATP synthase produces ATP from ADP in the presence of a proton or sodium gradient. F-type ATPases consist of two structural domains, F(1) containing the extramembraneous catalytic core and F(0) containing the membrane proton channel, linked together by a central stalk and a peripheral stalk. During catalysis, ATP synthesis in the catalytic domain of F(1) is coupled via a rotary mechanism of the central stalk subunits to proton translocation. Component of the F(0) channel, it forms part of the peripheral stalk, linking F(1) to F(0). In Phaseolus vulgaris (Kidney bean), this protein is ATP synthase subunit b, chloroplastic.